Here is an 860-residue protein sequence, read N- to C-terminus: Transcription factor E2F8 (860 aa).

The segment at 1–114 (MENQKENLFS…NEKSQPSRKE (114 aa)) is disordered. The residue at position 71 (serine 71) is a Phosphoserine. 2 stretches are compositionally biased toward basic and acidic residues: residues 74 to 84 (IRSRDQKRGLS) and 92 to 114 (EARDCLHEPQAKTNEKSQPSRKE). 2 consecutive DNA-binding regions follow at residues 112 to 181 (RKEK…TWHG) and 261 to 347 (RKDK…KWTG). Disordered regions lie at residues 407–433 (RRKISSAPSSPVKSSKAESSQNSPPVP) and 533–616 (TPPH…PKED). The segment covering 411 to 426 (SSAPSSPVKSSKAESS) has biased composition (low complexity). Serine 412 and serine 416 each carry phosphoserine. A compositionally biased stretch (polar residues) spans 542-554 (VCPTQSSNATGSK). Composition is skewed to basic and acidic residues over residues 555–565 (DPTDAPTEKTA) and 586–596 (RSKETTGDRGT).

The protein belongs to the E2F/DP family. In terms of assembly, homodimer and heterodimer: mainly forms homodimers and, to a lesser extent, heterodimers with E2F8. Dimerization is important for DNA-binding. Interacts with HIF1A.

It is found in the nucleus. In terms of biological role, atypical E2F transcription factor that participates in various processes such as angiogenesis and polyploidization of specialized cells. Mainly acts as a transcription repressor that binds DNA independently of DP proteins and specifically recognizes the E2 recognition site 5'-TTTC[CG]CGC-3'. Directly represses transcription of classical E2F transcription factors such as E2F1: component of a feedback loop in S phase by repressing the expression of E2F1, thereby preventing p53/TP53-dependent apoptosis. Plays a key role in polyploidization of cells in placenta and liver by regulating the endocycle, probably by repressing genes promoting cytokinesis and antagonizing action of classical E2F proteins (E2F1, E2F2 and/or E2F3). Required for placental development by promoting polyploidization of trophoblast giant cells. Acts as a promoter of sprouting angiogenesis, possibly by acting as a transcription activator: associates with HIF1A, recognizes and binds the VEGFA promoter, which is different from canonical E2 recognition site, and activates expression of the VEGFA gene. This chain is Transcription factor E2F8 (E2f8), found in Rattus norvegicus (Rat).